The sequence spans 544 residues: CTP synthase (544 aa).

Residues 1–265 form an amidoligase domain region; sequence MARFIFITGG…DEAVLSAFGI (265 aa). CTP is bound at residue Ser-13. Residue Ser-13 coordinates UTP. 14–19 is a binding site for ATP; it reads SLGKGL. Residue Tyr-54 participates in L-glutamine binding. ATP is bound at residue Asp-71. Mg(2+) contacts are provided by Asp-71 and Glu-139. Residues 146–148, 186–191, and Lys-222 contribute to the CTP site; these read DIE and KTKPTQ. UTP-binding positions include 186–191 and Lys-222; that span reads KTKPTQ. The Glutamine amidotransferase type-1 domain occupies 291-543; that stretch reads TIGVVGKYVG…IAAALQQSRL (253 aa). Position 355 (Gly-355) interacts with L-glutamine. The active-site Nucleophile; for glutamine hydrolysis is Cys-382. L-glutamine is bound by residues 383-386, Glu-406, and Arg-471; that span reads LGMQ. Active-site residues include His-516 and Glu-518.

It belongs to the CTP synthase family. Homotetramer.

The enzyme catalyses UTP + L-glutamine + ATP + H2O = CTP + L-glutamate + ADP + phosphate + 2 H(+). It carries out the reaction L-glutamine + H2O = L-glutamate + NH4(+). The catalysed reaction is UTP + NH4(+) + ATP = CTP + ADP + phosphate + 2 H(+). It participates in pyrimidine metabolism; CTP biosynthesis via de novo pathway; CTP from UDP: step 2/2. With respect to regulation, allosterically activated by GTP, when glutamine is the substrate; GTP has no effect on the reaction when ammonia is the substrate. The allosteric effector GTP functions by stabilizing the protein conformation that binds the tetrahedral intermediate(s) formed during glutamine hydrolysis. Inhibited by the product CTP, via allosteric rather than competitive inhibition. Catalyzes the ATP-dependent amination of UTP to CTP with either L-glutamine or ammonia as the source of nitrogen. Regulates intracellular CTP levels through interactions with the four ribonucleotide triphosphates. The polypeptide is CTP synthase (Rhizorhabdus wittichii (strain DSM 6014 / CCUG 31198 / JCM 15750 / NBRC 105917 / EY 4224 / RW1) (Sphingomonas wittichii)).